Reading from the N-terminus, the 370-residue chain is Serine/threonine-protein kinase RIM11/MSD1 (370 aa).

Residues 39–322 (FPTTEVVGHG…ALQCLCSPYF (284 aa)) form the Protein kinase domain. Residues 45 to 53 (VGHGSFGVV) and Lys68 contribute to the ATP site. Asp164 (proton acceptor) is an active-site residue. A Phosphotyrosine modification is found at Tyr199.

Belongs to the protein kinase superfamily. CMGC Ser/Thr protein kinase family. GSK-3 subfamily. In terms of assembly, interacts with TDA1.

It catalyses the reaction L-seryl-[protein] + ATP = O-phospho-L-seryl-[protein] + ADP + H(+). The catalysed reaction is L-threonyl-[protein] + ATP = O-phospho-L-threonyl-[protein] + ADP + H(+). Functionally, serine/threonine protein kinase that is thought to function in regulating kinetochore activity and entry into meiosis. Could phosphorylate IME1. The polypeptide is Serine/threonine-protein kinase RIM11/MSD1 (RIM11) (Saccharomyces cerevisiae (strain ATCC 204508 / S288c) (Baker's yeast)).